Reading from the N-terminus, the 148-residue chain is Puroindoline-A (148 aa).

The signal sequence occupies residues 1-19 (MKALFLIGLLALVASTAFA). The propeptide occupies 20-28 (QYSEVVGSY). A propeptide spans 147-148 (YW) (removed in mature form).

Post-translationally, five disulfide bonds are present. In terms of tissue distribution, endosperm and aleurone layer of developing kernels. In the aleurone layer, mainly localized to starch granules and the surface of the plasma membrane, forming a uniform layer, also abundant in the intercellular space. In the endosperm, mainly localized to starch granules and the plasma membrane, but less abundant in the intercellular space. Not found in roots or coleoptiles.

It is found in the membrane. The protein resides in the secreted. It localises to the extracellular space. Functionally, acts as a membranotoxin, probably through its antibacterial and antifungal activities, contributing to the defense mechanism of the plant against predators. Forms monovalent cation-selective ion channels in membranes. Has antibacterial activity against the Gram-positive bacteria S.aureus and C.michiganensis, and the Gram-negative bacteria E.coli, P.syringae pv phaseoli, A.tumefaciens and E.carotovora subsp carotovora. Acts synergistically with PINB against bacteria. Contributes to grain texture and hardness. The chain is Puroindoline-A (PINA) from Triticum aestivum (Wheat).